A 251-amino-acid chain; its full sequence is Homeobox protein notochord (251 aa).

A compositionally biased stretch (pro residues) spans 1–14 (MPSPRPRGSPPPAP). The tract at residues 1 to 47 (MPSPRPRGSPPPAPSGSRVRPPRSGRSPAPRSPTGPNTPRAPGRFES) is disordered. Low complexity predominate over residues 15 to 35 (SGSRVRPPRSGRSPAPRSPTG). The homeobox DNA-binding region spans 156–215 (QKRVRTMFNLEQLEELEKVFAKQHNLVGKKRAQLAARLKLTENQVRVWFQNRRVKYQKQQ). The segment covering 224 to 242 (AEAASLDEPSSSSIASIQS) has biased composition (low complexity). Residues 224–251 (AEAASLDEPSSSSIASIQSDDAESGVDG) are disordered.

It localises to the nucleus. In terms of biological role, transcription regulator acting downstream of both FOXA2 and Brachyury (T) during notochord development. Required for node morphogenesis. Is essential for cilia formation in the posterior notochord (PNC) and for left-right patterning; acts upstream of FOXJ1 and RFX3 in this process and is required for the expression of various components important for axonemal assembly and function. Plays a role in regulating axial versus paraxial cell fate. Activates the transcription of ciliary proteins C11orf97 homolog, FAM183B and SPACA9 in the embryonic ventral node. The chain is Homeobox protein notochord (NOTO) from Homo sapiens (Human).